We begin with the raw amino-acid sequence, 121 residues long: Large ribosomal subunit protein bL12 (121 aa).

The protein belongs to the bacterial ribosomal protein bL12 family. Homodimer. Part of the ribosomal stalk of the 50S ribosomal subunit. Forms a multimeric L10(L12)X complex, where L10 forms an elongated spine to which 2 to 4 L12 dimers bind in a sequential fashion. Binds GTP-bound translation factors.

Functionally, forms part of the ribosomal stalk which helps the ribosome interact with GTP-bound translation factors. Is thus essential for accurate translation. The protein is Large ribosomal subunit protein bL12 of Pelagibacter ubique (strain HTCC1062).